The following is a 1596-amino-acid chain: A-kinase anchor protein SPHKAP (1596 aa).

5 disordered regions span residues 214 to 233 (KHGR…RSVS), 242 to 319 (ASEQ…TPKQ), 389 to 432 (DNSE…GHPA), 462 to 481 (SGEE…DQGE), and 760 to 809 (EQSD…SSSS). Positions 292 to 306 (TLCTSSNSQKLSRTY) are enriched in polar residues. Residues 462-479 (SGEEYECEDEEEESETDQ) are compositionally biased toward acidic residues. The tract at residues 829–846 (FAEDLATTVVSMATELAA) is PKA-RII subunit binding domain. Disordered stretches follow at residues 958 to 1022 (VVDT…ISKQ), 1282 to 1310 (VGER…ENSC), and 1328 to 1443 (VPLI…SSLG). Residues 959 to 971 (VDTSKSGQSSRSR) are compositionally biased toward polar residues. The segment covering 1333-1356 (IEPDQREEASEEKGGVETHHREAS) has biased composition (basic and acidic residues). Over residues 1357-1372 (HQTQQQSGKGSETATK) the composition is skewed to polar residues. Composition is skewed to low complexity over residues 1398 to 1409 (LSASSEESGSGS) and 1430 to 1443 (LSEG…SSLG).

This sequence belongs to the AKAP110 family.

Its subcellular location is the cytoplasm. Functionally, anchoring protein that mediates the subcellular compartmentation of cAMP-dependent protein kinase (PKA type II). In Danio rerio (Zebrafish), this protein is A-kinase anchor protein SPHKAP (sphkap).